The following is a 199-amino-acid chain: NAD(P)H dehydrogenase (quinone) (199 aa).

The region spanning 4–190 (MLVLYYSAYG…DDARFQGRRV (187 aa)) is the Flavodoxin-like domain. FMN is bound by residues 10-15 (SAYGHM) and 78-80 (TRY). NAD(+) is bound at residue Y12. Residue W98 participates in substrate binding. FMN is bound by residues 113 to 119 (STATQHG) and H134. Residues 158-181 (GAPYGMTTTADGDGSRQPSAQELD) are disordered. The segment covering 163–177 (MTTTADGDGSRQPSA) has biased composition (polar residues).

Belongs to the WrbA family. The cofactor is FMN.

It catalyses the reaction a quinone + NADH + H(+) = a quinol + NAD(+). It carries out the reaction a quinone + NADPH + H(+) = a quinol + NADP(+). The polypeptide is NAD(P)H dehydrogenase (quinone) (Brucella ovis (strain ATCC 25840 / 63/290 / NCTC 10512)).